We begin with the raw amino-acid sequence, 380 residues long: MTADSAVLALVRELIARPSVTPDDVDCQLLLAQRLEHAGFRCETIARGDVTNLWARRGNAGPLVVFAGHTDVVPPGPRDKWDSDPFVPTERDGYLYGRGAADMKSSIAAFVVAAEEFTAAHPGHDGSIALLLTSDEEGPAVDGTVIVCDELRARGEQPDYCIVGEPTSGDVLGDTCKNGRRGSLSGRLTVKGIQGHVAYPHLARNPVHQLAPALAEMAATEWDRGNEYFPPTTFQVSNLRAGTGATNVVPGEAVVLFNFRFSTASTPEGLKQRVHALLDKHGLEYELDWELGGEPFLTPRGPLTDALVAAIRAETGVAAELSTTGGTSDGRFIAKICPQVIEFGPCNATIHKVNERIELASLEPLKNIYRRTLENLLLPR.

Zn(2+) is bound at residue histidine 69. Residue aspartate 71 is part of the active site. Aspartate 102 serves as a coordination point for Zn(2+). The active-site Proton acceptor is glutamate 136. Glutamate 137, glutamate 165, and histidine 351 together coordinate Zn(2+).

The protein belongs to the peptidase M20A family. DapE subfamily. In terms of assembly, homodimer. Zn(2+) is required as a cofactor. The cofactor is Co(2+).

The catalysed reaction is N-succinyl-(2S,6S)-2,6-diaminopimelate + H2O = (2S,6S)-2,6-diaminopimelate + succinate. The protein operates within amino-acid biosynthesis; L-lysine biosynthesis via DAP pathway; LL-2,6-diaminopimelate from (S)-tetrahydrodipicolinate (succinylase route): step 3/3. Catalyzes the hydrolysis of N-succinyl-L,L-diaminopimelic acid (SDAP), forming succinate and LL-2,6-diaminopimelate (DAP), an intermediate involved in the bacterial biosynthesis of lysine and meso-diaminopimelic acid, an essential component of bacterial cell walls. In Bordetella petrii (strain ATCC BAA-461 / DSM 12804 / CCUG 43448), this protein is Succinyl-diaminopimelate desuccinylase.